The following is a 199-amino-acid chain: uncharacterized protein (199 aa).

The first 23 residues, 1-23 (MKPGCTLFFLLCSALTVTTEAHA), serve as a signal peptide directing secretion.

This is an uncharacterized protein from Escherichia coli (strain K12).